A 122-amino-acid polypeptide reads, in one-letter code: Large ribosomal subunit protein uL18 (122 aa).

It belongs to the universal ribosomal protein uL18 family. In terms of assembly, part of the 50S ribosomal subunit; part of the 5S rRNA/L5/L18/L25 subcomplex. Contacts the 5S and 23S rRNAs.

This is one of the proteins that bind and probably mediate the attachment of the 5S RNA into the large ribosomal subunit, where it forms part of the central protuberance. This chain is Large ribosomal subunit protein uL18, found in Thermosipho africanus (strain TCF52B).